The chain runs to 295 residues: MAITAQMVKELREKTGAGMMDCKKALTETNGDMEKAIDFLREKGIAKAAKKADRIAAEGLTFIETNGNDGLILELNSETDFVAKNEGFQTLIKELAAHLLAKKPANVEEAMAQTMENGKKVEEHINEAIAKIGEKLTLRRFEIVSKTDADAFGAYLHMGGRIGVLTVLEGSTDEAAAKDVAMHIAAVNPKYIDRDAVTAEEVEHERQVLTQQALNEGKPEKIVAKMVEGRLGKFFEEICLLDQAFVKNPDMKVRQFVESKGATLKGFVRYAVGEGIEKREDNFAEEVMNQVKGSN.

The tract at residues 79 to 82 is involved in Mg(2+) ion dislocation from EF-Tu; that stretch reads TDFV.

The protein belongs to the EF-Ts family.

The protein localises to the cytoplasm. Associates with the EF-Tu.GDP complex and induces the exchange of GDP to GTP. It remains bound to the aminoacyl-tRNA.EF-Tu.GTP complex up to the GTP hydrolysis stage on the ribosome. This is Elongation factor Ts from Bacillus cereus (strain ATCC 10987 / NRS 248).